The chain runs to 213 residues: Phosphatidylserine decarboxylase proenzyme (213 aa).

The active-site Schiff-base intermediate with substrate; via pyruvic acid is the serine 183. Pyruvic acid (Ser); by autocatalysis is present on serine 183.

Belongs to the phosphatidylserine decarboxylase family. PSD-A subfamily. Heterodimer of a large membrane-associated beta subunit and a small pyruvoyl-containing alpha subunit. The cofactor is pyruvate. Is synthesized initially as an inactive proenzyme. Formation of the active enzyme involves a self-maturation process in which the active site pyruvoyl group is generated from an internal serine residue via an autocatalytic post-translational modification. Two non-identical subunits are generated from the proenzyme in this reaction, and the pyruvate is formed at the N-terminus of the alpha chain, which is derived from the carboxyl end of the proenzyme. The post-translation cleavage follows an unusual pathway, termed non-hydrolytic serinolysis, in which the side chain hydroxyl group of the serine supplies its oxygen atom to form the C-terminus of the beta chain, while the remainder of the serine residue undergoes an oxidative deamination to produce ammonia and the pyruvoyl prosthetic group on the alpha chain.

It localises to the cell membrane. The catalysed reaction is a 1,2-diacyl-sn-glycero-3-phospho-L-serine + H(+) = a 1,2-diacyl-sn-glycero-3-phosphoethanolamine + CO2. Its pathway is phospholipid metabolism; phosphatidylethanolamine biosynthesis; phosphatidylethanolamine from CDP-diacylglycerol: step 2/2. Catalyzes the formation of phosphatidylethanolamine (PtdEtn) from phosphatidylserine (PtdSer). The chain is Phosphatidylserine decarboxylase proenzyme from Syntrophus aciditrophicus (strain SB).